A 1379-amino-acid chain; its full sequence is Attractin-like protein 1 (1379 aa).

A disordered region spans residues 1 to 23 (METGGRARTGTPQPAAPGVWRAR). Positions 1–52 (METGGRARTGTPQPAAPGVWRARPAGGGGGGASSWLLDGNSWLLCYGFLYLA) are cleaved as a signal peptide. Residues 53–91 (LYAQVSQSKPCERTGSCFSGRCVNSTCLCDPGWVGDQCQ) enclose the EGF-like 1 domain. At 53 to 1230 (LYAQVSQSKP…FSQHNTIMDL (1178 aa)) the chain is on the extracellular side. Disulfide bonds link Cys-63–Cys-79, Cys-81–Cys-90, and Cys-93–Cys-119. Asn-76 is a glycosylation site (N-linked (GlcNAc...) asparagine). In terms of domain architecture, CUB spans 93–209 (CQGRFKLTEP…TGFNIFYSIN (117 aa)). Asn-174 and Asn-198 each carry an N-linked (GlcNAc...) asparagine glycan. An EGF-like 2 domain is found at 207–245 (SINSCPNNCSGHGKCTTSVSVPSQVYCECDKYWKGEACD). Disulfide bonds link Cys-211/Cys-221, Cys-215/Cys-233, and Cys-235/Cys-244. Kelch repeat units follow at residues 316 to 365 (FMWV…LYQE), 367 to 415 (IFMY…EGHS), 427 to 475 (VMII…SVYD), 480 to 531 (SIYV…LING), 533 to 591 (MLIF…VING), and 592 to 638 (SMYI…WNKN). The N-linked (GlcNAc...) asparagine glycan is linked to Asn-380. PSI domains follow at residues 614–657 (NCKA…AKCP), 666–709 (RCYR…TKCH), and 715–760 (ICNK…DACL). One can recognise a C-type lectin domain in the interval 755–873 (IGDACLRVNS…TSMANGLVCE (119 aa)). N-linked (GlcNAc...) asparagine glycans are attached at residues Asn-763, Asn-778, and Asn-898. Cys-776 and Cys-872 form a disulfide bridge. PSI domains follow at residues 889–939 (PCSL…ATCS) and 942–1012 (NCSG…IQCP). 8 disulfide bridges follow: Cys-1014/Cys-1022, Cys-1016/Cys-1028, Cys-1031/Cys-1040, Cys-1043/Cys-1057, Cys-1060/Cys-1069, Cys-1062/Cys-1076, Cys-1078/Cys-1088, and Cys-1091/Cys-1106. 2 consecutive Laminin EGF-like domains span residues 1014–1059 (CQCN…QCTA) and 1060–1108 (CTCS…TCYY). Asn-1157 is a glycosylation site (N-linked (GlcNAc...) asparagine). Residues 1231–1251 (VQFFVTFFSCFLSLLLVAAVV) traverse the membrane as a helical segment. Over 1252 to 1379 (WKIKQTCWAS…HLSTRQGTCV (128 aa)) the chain is Cytoplasmic. Positions 1354 to 1379 (KASDSKDKTSGVRNRKHLSTRQGTCV) are disordered.

Interacts with MC4R.

Its subcellular location is the membrane. In terms of biological role, may play a role in melanocortin signaling pathways that regulate energy homeostasis. This chain is Attractin-like protein 1 (ATRNL1), found in Homo sapiens (Human).